Consider the following 309-residue polypeptide: Probable lipid kinase YegS-like (309 aa).

Residues 1 to 133 enclose the DAGKc domain; sequence MPLTHIRLLL…IDIIRANNNY (133 aa). ATP-binding positions include serine 39, 65–71, and threonine 95; that span reads GDGSLNE. Positions 214, 217, and 219 each coordinate Mg(2+). Glutamate 273 functions as the Proton acceptor in the catalytic mechanism.

It belongs to the diacylglycerol/lipid kinase family. YegS lipid kinase subfamily. The cofactor is Mg(2+). It depends on Ca(2+) as a cofactor.

It localises to the cytoplasm. Its function is as follows. Probably phosphorylates lipids; the in vivo substrate is unknown. The polypeptide is Probable lipid kinase YegS-like (Shewanella frigidimarina (strain NCIMB 400)).